We begin with the raw amino-acid sequence, 209 residues long: Protease (209 aa).

Catalysis depends on residues histidine 55, aspartate 72, and cysteine 123.

This sequence belongs to the peptidase C5 family. Interacts with protease cofactor pVI-C; this interaction is necessary for protease activation.

The protein localises to the virion. Its subcellular location is the host nucleus. The enzyme catalyses Cleaves proteins of the adenovirus and its host cell at two consensus sites: -Yaa-Xaa-Gly-Gly-|-Xaa- and -Yaa-Xaa-Gly-Xaa-|-Gly- (in which Yaa is Met, Ile or Leu, and Xaa is any amino acid).. Requires DNA and protease cofactor for maximal activation. Inside nascent virions, becomes partially activated by binding to the viral DNA, allowing it to cleave the cofactor that binds to the protease and fully activates it. Actin, like the viral protease cofactor, seems to act as a cofactor in the cleavage of cytokeratin 18 and of actin itself. In terms of biological role, cleaves viral precursor proteins (pTP, pIIIa, pVI, pVII, pVIII, and pX) inside newly assembled particles giving rise to mature virions. Protease complexed to its cofactor slides along the viral DNA to specifically locate and cleave the viral precursors. Mature virions have a weakened organization compared to the unmature virions, thereby facilitating subsequent uncoating. Without maturation, the particle lacks infectivity and is unable to uncoat. Late in adenovirus infection, in the cytoplasm, may participate in the cytoskeleton destruction. Cleaves host cell cytoskeletal keratins K7 and K18. The polypeptide is Protease (Human adenovirus D serotype 17 (HAdV-17)).